The chain runs to 482 residues: G2/mitotic-specific cyclin cdc13 (482 aa).

Composition is skewed to polar residues over residues 35 to 55 (LHSSENSLVNGKKATVSSTNV), 78 to 92 (SKNTNVRHTTASVST), and 118 to 140 (SVFNSSVPSLPQHLSTKSHSVST). A disordered region spans residues 35 to 140 (LHSSENSLVN…LSTKSHSVST (106 aa)). A Cyclin N-terminal domain is found at 206 to 332 (DIFEYLNELE…ILRVLEFNLA (127 aa)).

The protein belongs to the cyclin family. Cyclin AB subfamily. As to quaternary structure, interacts with cdc2. Interacts with rum1. Associates with microtubules. Also interacts with cdc11.

It localises to the nucleus. Its subcellular location is the cytoplasm. The protein resides in the cytoskeleton. The protein localises to the microtubule organizing center. It is found in the spindle pole body. In terms of biological role, essential for the control of the cell cycle at the G2/M (mitosis) transition. Interacts with the cdc2 protein kinase to form MPF. G2/M cyclins accumulate steadily during G2 and are abruptly destroyed at mitosis. Involved in the reorganization of the cytoskeleton on transition from G2 to mitosis. Association with rum1 promotes its proteolysis during G1. Also essential for initiation of meiosis II. The polypeptide is G2/mitotic-specific cyclin cdc13 (Schizosaccharomyces pombe (strain 972 / ATCC 24843) (Fission yeast)).